Consider the following 341-residue polypeptide: S-adenosylmethionine:tRNA ribosyltransferase-isomerase (341 aa).

This sequence belongs to the QueA family. As to quaternary structure, monomer.

It localises to the cytoplasm. The enzyme catalyses 7-aminomethyl-7-carbaguanosine(34) in tRNA + S-adenosyl-L-methionine = epoxyqueuosine(34) in tRNA + adenine + L-methionine + 2 H(+). Its pathway is tRNA modification; tRNA-queuosine biosynthesis. In terms of biological role, transfers and isomerizes the ribose moiety from AdoMet to the 7-aminomethyl group of 7-deazaguanine (preQ1-tRNA) to give epoxyqueuosine (oQ-tRNA). The chain is S-adenosylmethionine:tRNA ribosyltransferase-isomerase from Pelotomaculum thermopropionicum (strain DSM 13744 / JCM 10971 / SI).